The sequence spans 426 residues: MGEPGQSPSPRSSHGSPPTLSTLTLLLLLCGHAHSQCKILRCNAEYVSSTLSLRGGGSSGALRGGGGGGRGGGVGSGGLCRALRSYALCTRRTARTCRGDLAFHSAVHGIEDLMIQHNCSRQGPTAPPPPRGPALPGAGSGLPAPDPCDYEGRFSRLHGRPPGFLHCASFGDPHVRSFHHHFHTCRVQGAWPLLDNDFLFVQATSSPMALGANATATRKLTIIFKNMQECIDQKVYQAEVDNLPVAFEDGSINGGDRPGGSSLSIQTANPGNHVEIQAAYIGTTIIIRQTAGQLSFSIKVAEDVAMAFSAEQDLQLCVGGCPPSQRLSRSERNRRGAITIDTARRLCKEGLPVEDAYFHSCVFDVLISGDPNFTVAAQAALEDARAFLPDLEKLHLFPSDAGVPLSSATLLAPLLSGLFVLWLCIQ.

The N-terminal stretch at 1-35 (MGEPGQSPSPRSSHGSPPTLSTLTLLLLLCGHAHS) is a signal peptide. Phosphotyrosine is present on tyrosine 46. Asparagine 118 carries an N-linked (GlcNAc...) asparagine glycan. Residues 119–142 (CSRQGPTAPPPPRGPALPGAGSGL) form a disordered region. 2 disulfides stabilise this stretch: cysteine 148-cysteine 230 and cysteine 167-cysteine 317. N-linked (GlcNAc...) asparagine glycans are attached at residues asparagine 213 and asparagine 372. The GPI-anchor amidated aspartate moiety is linked to residue aspartate 400. Positions 401-426 (AGVPLSSATLLAPLLSGLFVLWLCIQ) are cleaved as a propeptide — removed in mature form.

It belongs to the repulsive guidance molecule (RGM) family. Interacts with BMP2 and BMP4. Interacts with BMP6. Interacts with BMPR1B. Interacts with TMPRSS6. Post-translationally, autocatalytically cleaved at low pH; the two chains remain linked via two disulfide bonds. Also proteolytically processed by TMPRSS6, several fragments being released in the extracellular space; regulates HJV activity in BMP signaling and thefore iron homeostasis. Adult and fetal liver, heart, and skeletal muscle.

It localises to the cell membrane. Acts as a bone morphogenetic protein (BMP) coreceptor. Through enhancement of BMP signaling regulates hepcidin (HAMP) expression and regulates iron homeostasis. The protein is Hemojuvelin of Homo sapiens (Human).